Consider the following 392-residue polypeptide: Probable tRNA sulfurtransferase (392 aa).

The THUMP domain occupies 59-166 (SCYREALKRV…DEGLFIYTTE (108 aa)). Residues 186-187 (LL), 211-212 (YF), Arg269, Gly290, and Gln299 each bind ATP.

This sequence belongs to the ThiI family.

Its subcellular location is the cytoplasm. It catalyses the reaction [ThiI sulfur-carrier protein]-S-sulfanyl-L-cysteine + a uridine in tRNA + 2 reduced [2Fe-2S]-[ferredoxin] + ATP + H(+) = [ThiI sulfur-carrier protein]-L-cysteine + a 4-thiouridine in tRNA + 2 oxidized [2Fe-2S]-[ferredoxin] + AMP + diphosphate. It carries out the reaction [ThiS sulfur-carrier protein]-C-terminal Gly-Gly-AMP + S-sulfanyl-L-cysteinyl-[cysteine desulfurase] + AH2 = [ThiS sulfur-carrier protein]-C-terminal-Gly-aminoethanethioate + L-cysteinyl-[cysteine desulfurase] + A + AMP + 2 H(+). It functions in the pathway cofactor biosynthesis; thiamine diphosphate biosynthesis. Its function is as follows. Catalyzes the ATP-dependent transfer of a sulfur to tRNA to produce 4-thiouridine in position 8 of tRNAs, which functions as a near-UV photosensor. Also catalyzes the transfer of sulfur to the sulfur carrier protein ThiS, forming ThiS-thiocarboxylate. This is a step in the synthesis of thiazole, in the thiamine biosynthesis pathway. The sulfur is donated as persulfide by IscS. The chain is Probable tRNA sulfurtransferase from Coxiella burnetii (strain RSA 493 / Nine Mile phase I).